Here is a 293-residue protein sequence, read N- to C-terminus: MAWVQIRLNSTDKQAEQISDFLEEIGAVSVTFMDSQDTPIFEPLPGETRLWGNTDVVGLFDAETDMKAIVEALIASRLVEADFVHKIEQIEDKDWEREWMDNFHPMQFGKRLWICPSWREVPDPNAVNVMLDPGLAFGTGTHPTTALCLQWLDSLDLTGKTVIDFGCGSGILAIAALKLGAKQAIGIDIDPQAILASGNNAEANGVADRLQLFLAKDQPQDLQADVVVANILAGPLKELAPNIITLVKPQGDLGLSGILATQAESVCEAYAPDFNLDPVVEKEEWCRITGVKK.

S-adenosyl-L-methionine-binding residues include Thr-145, Gly-166, Asp-188, and Asn-230.

Belongs to the methyltransferase superfamily. PrmA family.

It localises to the cytoplasm. The enzyme catalyses L-lysyl-[protein] + 3 S-adenosyl-L-methionine = N(6),N(6),N(6)-trimethyl-L-lysyl-[protein] + 3 S-adenosyl-L-homocysteine + 3 H(+). Methylates ribosomal protein L11. In Actinobacillus pleuropneumoniae serotype 7 (strain AP76), this protein is Ribosomal protein L11 methyltransferase.